A 275-amino-acid chain; its full sequence is Phosphate import ATP-binding protein PstB 1 (275 aa).

Residues 22–261 (IETRDLSVYY…DRTEKIFNSP (240 aa)) enclose the ABC transporter domain. 54–61 (GPSGCGKS) contributes to the ATP binding site.

This sequence belongs to the ABC transporter superfamily. Phosphate importer (TC 3.A.1.7) family. In terms of assembly, the complex is composed of two ATP-binding proteins (PstB), two transmembrane proteins (PstC and PstA) and a solute-binding protein (PstS).

It is found in the cell inner membrane. The enzyme catalyses phosphate(out) + ATP + H2O = ADP + 2 phosphate(in) + H(+). In terms of biological role, part of the ABC transporter complex PstSACB involved in phosphate import. Responsible for energy coupling to the transport system. The protein is Phosphate import ATP-binding protein PstB 1 of Synechococcus sp. (strain JA-3-3Ab) (Cyanobacteria bacterium Yellowstone A-Prime).